Consider the following 669-residue polypeptide: 5-taurinomethyluridine-[tRNA] synthase subunit MTO1, mitochondrial (669 aa).

A mitochondrion-targeting transit peptide spans 1–25; it reads MFLLRGRGHWAAASLGRRLPLRRLR. FAD contacts are provided by residues 42–47, Val154, Ser217, and Gln406; that span reads GGGHAG. Lys507 carries the post-translational modification N6-methyllysine.

The protein belongs to the MnmG family. As to quaternary structure, homodimer; forms a dimer in the presence of potassium. Interacts with GTPBP3; forms the GTPBP3-MTO1 complex composed of homodimers of GTPBP3 and MTO1. The cofactor is FAD. As to expression, ubiquitously expressed in various tissues, but with markedly elevated expression in tissues of high metabolic rates.

Its subcellular location is the mitochondrion. It carries out the reaction 5,10-methylenetetrahydrofolate + uridine(34) in tRNA + taurine + GTP + A + H2O = 5-taurinomethyluridine(34) in tRNA + 7,8-dihydrofolate + GDP + AH2 + phosphate + H(+). Functionally, component of the GTPBP3-MTO1 complex that catalyzes the 5-taurinomethyluridine (taum(5)U) modification at the 34th wobble position (U34) of mitochondrial tRNAs (mt-tRNAs), which plays a role in mt-tRNA decoding and mitochondrial translation. Taum(5)U formation on mammalian mt-tRNA requires the presence of both GTPBP3-mediated GTPase activity and MTO1 catalytic activity. The polypeptide is 5-taurinomethyluridine-[tRNA] synthase subunit MTO1, mitochondrial (Mus musculus (Mouse)).